The sequence spans 218 residues: Insulin-induced gene 2 protein (218 aa).

The Cytoplasmic segment spans residues 1 to 21; that stretch reads MGETDNAPRGPPSFLPHKMNL. The helical transmembrane segment at 22–44 threads the bilayer; sequence LLRGLLLFLIGVFLALVLNLLQV. Topologically, residues 45-63 are lumenal; the sequence is QRNVTLFPPDVLSSLFSSA. The chain crosses the membrane as a helical span at residues 64–81; it reads WWVPLCCGTAAAAIGLLY. Residues 82-96 lie on the Cytoplasmic side of the membrane; sequence PCIDRHLGEPHKFKR. The chain crosses the membrane as a helical span at residues 97 to 119; that stretch reads EWSSVMRCVAVFVGINHASAKVD. Over 120–122 the chain is Lumenal; the sequence is FAN. The helical transmembrane segment at 123-141 threads the bilayer; sequence NTQLSLTLAALSIGLWWTF. The Cytoplasmic segment spans residues 142 to 146; the sequence is DRSRS. Residues 147–168 traverse the membrane as a helical segment; sequence GLGLGIGISFFATVVSQLLVYN. Residues 169 to 182 are Lumenal-facing; sequence GVYEYTAPDFLYVR. Residues 183–200 traverse the membrane as a helical segment; the sequence is SWLPCIFFAGGITMGNIG. Over 201–218 the chain is Cytoplasmic; sequence RQLEMYERLALVEKSHRD. A KxHxx motif is present at residues 212–218; sequence VEKSHRD.

Belongs to the INSIG family. As to quaternary structure, interacts with scap; interaction is direct and only takes place in the presence of sterols; it prevents interaction between scap and the coat protein complex II (COPII). Associates with the SCAP-SREBP complex; association is mediated via its interaction with scap and only takes place in the presence of sterols.

The protein localises to the endoplasmic reticulum membrane. Functionally, oxysterol-binding protein that mediates feedback control of cholesterol synthesis by controlling both endoplasmic reticulum to Golgi transport of scap and degradation of hmgcr. Acts as a negative regulator of cholesterol biosynthesis by mediating the retention of the SCAP-SREBP complex in the endoplasmic reticulum, thereby blocking the processing of sterol regulatory element-binding proteins (SREBPs). Binds oxysterol, including 22-hydroxycholesterol, 24-hydroxycholesterol, 25-hydroxycholesterol and 27-hydroxycholesterol, regulating interaction with scap and retention of the SCAP-SREBP complex in the endoplasmic reticulum. In presence of oxysterol, interacts with scap, retaining the SCAP-SREBP complex in the endoplasmic reticulum, thereby preventing scap from escorting SREBPs to the Golgi. Sterol deprivation reduce oxysterol-binding, disrupting the interaction between insig2 and scap, thereby promoting Golgi transport of the SCAP-SREBP complex, followed by processing and nuclear translocation of SREBPs. Also regulates cholesterol synthesis by regulating degradation of hmgcr. This chain is Insulin-induced gene 2 protein, found in Xenopus tropicalis (Western clawed frog).